We begin with the raw amino-acid sequence, 303 residues long: Ribosomal RNA small subunit methyltransferase A (303 aa).

S-adenosyl-L-methionine-binding residues include Asn-37, Val-39, Gly-64, Glu-85, Asp-115, and Asn-138.

The protein belongs to the class I-like SAM-binding methyltransferase superfamily. rRNA adenine N(6)-methyltransferase family. RsmA subfamily.

It localises to the cytoplasm. The catalysed reaction is adenosine(1518)/adenosine(1519) in 16S rRNA + 4 S-adenosyl-L-methionine = N(6)-dimethyladenosine(1518)/N(6)-dimethyladenosine(1519) in 16S rRNA + 4 S-adenosyl-L-homocysteine + 4 H(+). Its function is as follows. Specifically dimethylates two adjacent adenosines (A1518 and A1519) in the loop of a conserved hairpin near the 3'-end of 16S rRNA in the 30S particle. May play a critical role in biogenesis of 30S subunits. The protein is Ribosomal RNA small subunit methyltransferase A of Bifidobacterium adolescentis (strain ATCC 15703 / DSM 20083 / NCTC 11814 / E194a).